We begin with the raw amino-acid sequence, 113 residues long: Iron-sulfur cluster assembly protein CyaY (113 aa).

Belongs to the frataxin family.

Its function is as follows. Involved in iron-sulfur (Fe-S) cluster assembly. May act as a regulator of Fe-S biogenesis. This Ralstonia nicotianae (strain ATCC BAA-1114 / GMI1000) (Ralstonia solanacearum) protein is Iron-sulfur cluster assembly protein CyaY.